The following is a 208-amino-acid chain: UPF0637 protein BcerKBAB4_3786 (208 aa).

The protein belongs to the UPF0637 family.

The polypeptide is UPF0637 protein BcerKBAB4_3786 (Bacillus mycoides (strain KBAB4) (Bacillus weihenstephanensis)).